The following is a 498-amino-acid chain: Glutamate--tRNA ligase (498 aa).

The 'HIGH' region motif lies at 11–21; sequence PSPTGHLHIGN. The 'KMSKS' region motif lies at 260–264; sequence KLSKR. Lys-263 is an ATP binding site.

The protein belongs to the class-I aminoacyl-tRNA synthetase family. Glutamate--tRNA ligase type 1 subfamily. As to quaternary structure, monomer.

Its subcellular location is the cytoplasm. It catalyses the reaction tRNA(Glu) + L-glutamate + ATP = L-glutamyl-tRNA(Glu) + AMP + diphosphate. Catalyzes the attachment of glutamate to tRNA(Glu) in a two-step reaction: glutamate is first activated by ATP to form Glu-AMP and then transferred to the acceptor end of tRNA(Glu). The polypeptide is Glutamate--tRNA ligase (Leuconostoc citreum (strain KM20)).